A 2344-amino-acid chain; its full sequence is Genome polyprotein (2344 aa).

The region spanning 492–653 is the SF3 helicase domain; it reads QKVISDLHTM…ESWQATRHGS (162 aa). Residue 522–529 coordinates ATP; sequence GAPGIGKT. At tyrosine 1014 the chain carries O-(5'-phospho-RNA)-tyrosine. At tyrosine 1014 the chain carries O-UMP-tyrosine; transient. The Peptidase C24 domain occupies 1109–1244; the sequence is GLPGFMRHNG…SKMCTLIDLT (136 aa). Residues histidine 1135, aspartate 1152, and cysteine 1212 each act as for 3CLpro activity in the active site. Positions 1495–1619 constitute a RdRp catalytic domain; that stretch reads SDFLCLDYSK…AMTPMMVSLL (125 aa). Cysteines 1584 and 1591 form a disulfide. Residues 1771 to 1796 are disordered; that stretch reads RTAPQGEAAGTATTASVPGTTTDGMD. The span at 1778-1794 shows a compositional bias: low complexity; the sequence is AAGTATTASVPGTTTDG.

In terms of assembly, homodimer. Homomultimer. Interacts with host type II histo-blood group structures antigens at the surface of target cells. Requires Mn(2+) as cofactor. In terms of processing, specific enzymatic cleavages by its own cysteine protease yield mature proteins. The protease cleaves itself from the nascent polyprotein autocatalytically. Precursor p41 can be cleaved by viral 3CLpro into protein p19 and VPg, or cleaved by host protease into protein p23/2 and protein p18. VPg is uridylylated by the polymerase and is covalently attached to the 5'-end of the polyadenylated genomic and subgenomic RNAs. This uridylylated form acts as a nucleotide-peptide primer for the polymerase.

It is found in the host cytoplasm. Its subcellular location is the host endoplasmic reticulum. The protein resides in the virion. The catalysed reaction is a ribonucleoside 5'-triphosphate + H2O = a ribonucleoside 5'-diphosphate + phosphate + H(+). The enzyme catalyses Endopeptidase with a preference for cleavage when the P1 position is occupied by Glu-|-Xaa and the P1' position is occupied by Gly-|-Yaa.. It catalyses the reaction RNA(n) + a ribonucleoside 5'-triphosphate = RNA(n+1) + diphosphate. Together with NTPase and NS4, initiates the formation of the replication complex. Induces the proliferation of the host smooth ER membranes forming long tubular structures. These remodeled membranes probably form the viral factories that contain the replication complex. In terms of biological role, displays NTPase activity, but no helicase activity. Induces the formation of convoluted membranes derived from the host ER. These remodeled membranes probably form the viral factories that contain the replication complex. Together with NS2 and NS4, initiates the formation of the replication complex. Functionally, probable key protein responsible for the formation of membrane alterations by the virus. Induces the formation of convoluted membranes derived from the host ER. These remodeled membranes probably form the viral factories that contain the replication complex. Together with NS2 and NTPase, initiates the formation of the replication complex. Its function is as follows. Viral genome-linked protein is covalently linked to the 5'-end of the positive-strand, negative-strand genomic RNAs and subgenomic RNA. Acts as a genome-linked replication primer. May recruit ribosome to viral RNA thereby promoting viral proteins translation. Interacts with host translation initiation complex to allow the translation of viral proteins. Processes the polyprotein. 3CLpro-RdRp is first released by autocleavage, then all other proteins are cleaved. May cleave polyadenylate-binding protein thereby inhibiting cellular translation. In terms of biological role, replicates genomic and antigenomic RNA by recognizing replications specific signals. Also transcribes a subgenomic mRNA by initiating RNA synthesis internally on antigenomic RNA. This sgRNA codes for structural proteins. Catalyzes the covalent attachment VPg with viral RNAs. Functionally, capsid protein VP60 self assembles to form an icosahedral capsid with a T=3 symmetry, about 35 nm in diameter, and consisting of 180 capsid proteins. A smaller form of capsid with a diameter of 23 nm might be capsid proteins assembled as icosahedron with T=1 symmetry. The capsid encapsulate VP2 proteins and genomic or subgenomic RNA. Attaches virion to target cells by binding histo-blood group antigens, inducing endocytosis of the viral particle. Acidification of the endosome induces conformational change of capsid protein thereby injecting virus genomic RNA into host cytoplasm. This chain is Genome polyprotein, found in Oryctolagus cuniculus (Rabbit).